Reading from the N-terminus, the 43-residue chain is Large ribosomal subunit protein uL5 (43 aa).

Belongs to the universal ribosomal protein uL5 family. In terms of assembly, part of the 50S ribosomal subunit; part of the 5S rRNA/L5/L18/L25 subcomplex. Contacts the 5S rRNA and the P site tRNA. Forms a bridge to the 30S subunit in the 70S ribosome.

Functionally, this is one of the proteins that bind and probably mediate the attachment of the 5S RNA into the large ribosomal subunit, where it forms part of the central protuberance. In the 70S ribosome it contacts protein S13 of the 30S subunit (bridge B1b), connecting the 2 subunits; this bridge is implicated in subunit movement. Contacts the P site tRNA; the 5S rRNA and some of its associated proteins might help stabilize positioning of ribosome-bound tRNAs. The sequence is that of Large ribosomal subunit protein uL5 (rplE) from Proteus vulgaris.